The chain runs to 380 residues: All-trans-retinol dehydrogenase [NAD(+)] ADH4 (380 aa).

C47 serves as a coordination point for Zn(2+). 48 to 49 (HT) contributes to the NAD(+) binding site. 5 residues coordinate Zn(2+): H69, C99, C102, C105, and C113. S121 is modified (phosphoserine). C180 contacts Zn(2+). NAD(+) contacts are provided by residues 205 to 210 (GLGGVG), D229, and K234. Position 278 is a phosphoserine (S278). Residues 298-300 (IGV), 323-325 (TFF), and R375 each bind NAD(+).

This sequence belongs to the zinc-containing alcohol dehydrogenase family. Class-II subfamily. Homodimer. The cofactor is Zn(2+).

The protein localises to the cytoplasm. The enzyme catalyses all-trans-retinol + NAD(+) = all-trans-retinal + NADH + H(+). The catalysed reaction is 9-cis-retinol + NAD(+) = 9-cis-retinal + NADH + H(+). It catalyses the reaction 20-oxo-(5Z,8Z,11Z,14Z)-eicosatetraenoate + NAD(+) + H2O = (5Z,8Z,11Z,14Z)-eicosatetraenedioate + NADH + 2 H(+). It carries out the reaction 20-hydroxy-(5Z,8Z,11Z,14Z)-eicosatetraenoate + NAD(+) = 20-oxo-(5Z,8Z,11Z,14Z)-eicosatetraenoate + NADH + H(+). The enzyme catalyses 1,4-benzoquinone + NADH + H(+) = hydroquinone + NAD(+). Oxydation of 20-HETE is inhibited by low concentrations of N-heptylformamide. Oxydation of 20-HETE is a decreased by 55-65% by either all-trans-retinol or all-trans-retinoic acid. Strongly inhibited by omega-hydroxy fatty acids. Its function is as follows. Catalyzes the NAD-dependent oxidation of either all-trans-retinol or 9-cis-retinol. Also oxidizes long chain omega-hydroxy fatty acids, such as 20-HETE, producing both the intermediate aldehyde, 20-oxoarachidonate and the end product, a dicarboxylic acid, (5Z,8Z,11Z,14Z)-eicosatetraenedioate. Also catalyzes the reduction of benzoquinones. This Homo sapiens (Human) protein is All-trans-retinol dehydrogenase [NAD(+)] ADH4.